A 6486-amino-acid polypeptide reads, in one-letter code: Tyrocidine synthase 3 (6486 aa).

Residues 466–1038 (IFELIAEQAS…VAELARFLSR (573 aa)) are domain 1 (asparagine-activating). Carrier domains lie at 965–1040 (APQN…SRSE), 2002–2077 (APRN…AAAR), 3040–3115 (APTN…ATSG), 4075–4150 (AAQN…AESA), 5119–5194 (APRS…EETA), and 6162–6237 (APRN…THKR). O-(pantetheine 4'-phosphoryl)serine is present on residues Ser1000, Ser2037, Ser3075, Ser4110, Ser5154, and Ser6197. The segment at 1521–2070 (YEEYALTYRE…FESPTIAGLA (550 aa)) is domain 2 (glutamine-activating). The segment at 2536-3113 (NKTLQALFEE…IKALAQYVAT (578 aa)) is domain 3 (tyrosine-activating). Residues 3590 to 4149 (EHAAVVMDGQ…HELAAHIAES (560 aa)) form a domain 4 (valine-activating) region. The segment at 4606–5203 (YPTDKTFQKL…AKGNVFSIEP (598 aa)) is domain 5 (ornithine-activating). The domain 6 (leucine-activating) stretch occupies residues 5658–6245 (LHQLFEEQVD…KRFESRYGTA (588 aa)).

It belongs to the ATP-dependent AMP-binding enzyme family. As to quaternary structure, large multienzyme complex of TycA, TycB and TycC. Pantetheine 4'-phosphate is required as a cofactor.

The protein operates within antibiotic biosynthesis; tyrocidine biosynthesis. Incorporates six amino acids (for tyrocidine A, Asn, Gln, Tyr, Val, Orn, and Leu) in their L-configuration into the peptide product. The sequence is that of Tyrocidine synthase 3 (tycC) from Brevibacillus parabrevis.